The primary structure comprises 116 residues: Ribosome-binding factor A (116 aa).

The protein belongs to the RbfA family. Monomer. Binds 30S ribosomal subunits, but not 50S ribosomal subunits or 70S ribosomes.

The protein localises to the cytoplasm. Its function is as follows. One of several proteins that assist in the late maturation steps of the functional core of the 30S ribosomal subunit. Associates with free 30S ribosomal subunits (but not with 30S subunits that are part of 70S ribosomes or polysomes). Required for efficient processing of 16S rRNA. May interact with the 5'-terminal helix region of 16S rRNA. The sequence is that of Ribosome-binding factor A from Staphylococcus aureus (strain JH9).